Reading from the N-terminus, the 465-residue chain is Protein maelstrom (465 aa).

The segment at residues 2–69 (APKKHSAFMV…ADRAKRERLN (68 aa)) is a DNA-binding region (HMG box). 2 disordered regions span residues 373–394 (NQSE…SYTP) and 419–443 (SKHR…PTHS). Positions 381–391 (SSSRPSVESSS) are enriched in low complexity. Residues 422–433 (RGLDVSAQRERN) are compositionally biased toward basic and acidic residues.

This sequence belongs to the maelstrom family.

It localises to the cytoplasm. The protein localises to the nucleus. Its function is as follows. Involved both in the piRNA and miRNA metabolic processes. As a component of the meiotic nuage, plays a central role during oogenesis by repressing transposable elements and preventing their mobilization, which is essential for the germline integrity. Repression of transposable elements is mediated via the piRNA metabolic process, which mediates the repression of transposable elements during meiosis by forming complexes composed of piRNAs and Piwi proteins and governs the repression of transposons. As a nuclear component, it is required for proper differentiation in the germline stem cell (GSC) lineage by repressing microRNA-7 (miR-7), thereby acting as an indirect regulator of bag-of-marbles (Bam). Acts by binding to the promoter of miR-7 gene and repressing its expression; miR-7 repression alleviates the Bam repression by miR-7, thereby allowing differentiation in the germline stem cell (GSC) lineage. The sequence is that of Protein maelstrom (mael) from Drosophila erecta (Fruit fly).